The chain runs to 204 residues: Redox-sensing transcriptional repressor Rex 2 (204 aa).

Residues 17–53 (MYRKVLEATKKPYISSDEIARFLEINPDLVRKDFSYL) constitute a DNA-binding region (H-T-H motif).

It belongs to the transcriptional regulatory Rex family. Homodimer.

The protein resides in the cytoplasm. Modulates transcription in response to changes in cellular NADH/NAD(+) redox state. The sequence is that of Redox-sensing transcriptional repressor Rex 2 (rex2) from Thermotoga maritima (strain ATCC 43589 / DSM 3109 / JCM 10099 / NBRC 100826 / MSB8).